Here is a 518-residue protein sequence, read N- to C-terminus: Probable Xaa-Pro aminopeptidase HCDG_07916 (518 aa).

Mn(2+)-binding residues include Asp-289, Asp-300, Glu-437, and Glu-475.

The protein belongs to the peptidase M24B family. It depends on Mn(2+) as a cofactor.

It carries out the reaction Release of any N-terminal amino acid, including proline, that is linked to proline, even from a dipeptide or tripeptide.. Catalyzes the removal of a penultimate prolyl residue from the N-termini of peptides. This is Probable Xaa-Pro aminopeptidase HCDG_07916 from Ajellomyces capsulatus (strain H143) (Darling's disease fungus).